Consider the following 266-residue polypeptide: Glutamate racemase (266 aa).

Substrate is bound by residues 9–10 and 41–42; these read DS and YG. C72 functions as the Proton donor/acceptor in the catalytic mechanism. A substrate-binding site is contributed by 73-74; that stretch reads NT. Residue C184 is the Proton donor/acceptor of the active site. Position 185 to 186 (185 to 186) interacts with substrate; sequence TH.

The protein belongs to the aspartate/glutamate racemases family.

It carries out the reaction L-glutamate = D-glutamate. Its pathway is cell wall biogenesis; peptidoglycan biosynthesis. Functionally, provides the (R)-glutamate required for cell wall biosynthesis. This is Glutamate racemase from Staphylococcus aureus (strain Mu3 / ATCC 700698).